A 46-amino-acid polypeptide reads, in one-letter code: MTAQGNKPSSHDVITGRWTPSAADRAAGRVSGFGVITNIINGGLDC.

This sequence belongs to the glycosyl hydrolase 19 family. Chitinase class I subfamily.

The catalysed reaction is Random endo-hydrolysis of N-acetyl-beta-D-glucosaminide (1-&gt;4)-beta-linkages in chitin and chitodextrins.. In terms of biological role, defense against chitin-containing fungal and bacterial pathogens. The polypeptide is Endochitinase 1A (Arachis hypogaea (Peanut)).